The sequence spans 223 residues: Guanylate kinase (223 aa).

Residues methionine 1–arginine 22 are disordered. Positions proline 7–glycine 19 are enriched in basic and acidic residues. One can recognise a Guanylate kinase-like domain in the interval glycine 21–valine 201. Glycine 28–serine 35 is a binding site for ATP. The tract at residues alanine 204 to aspartate 223 is disordered. Positions glycine 212–aspartate 223 are enriched in polar residues.

The protein belongs to the guanylate kinase family.

The protein resides in the cytoplasm. It carries out the reaction GMP + ATP = GDP + ADP. Essential for recycling GMP and indirectly, cGMP. The sequence is that of Guanylate kinase from Mycolicibacterium paratuberculosis (strain ATCC BAA-968 / K-10) (Mycobacterium paratuberculosis).